We begin with the raw amino-acid sequence, 295 residues long: 4-hydroxy-tetrahydrodipicolinate synthase (295 aa).

T48 contributes to the pyruvate binding site. Y136 (proton donor/acceptor) is an active-site residue. K164 functions as the Schiff-base intermediate with substrate in the catalytic mechanism. I206 serves as a coordination point for pyruvate.

It belongs to the DapA family. In terms of assembly, homotetramer; dimer of dimers.

Its subcellular location is the cytoplasm. It catalyses the reaction L-aspartate 4-semialdehyde + pyruvate = (2S,4S)-4-hydroxy-2,3,4,5-tetrahydrodipicolinate + H2O + H(+). The protein operates within amino-acid biosynthesis; L-lysine biosynthesis via DAP pathway; (S)-tetrahydrodipicolinate from L-aspartate: step 3/4. Catalyzes the condensation of (S)-aspartate-beta-semialdehyde [(S)-ASA] and pyruvate to 4-hydroxy-tetrahydrodipicolinate (HTPA). The sequence is that of 4-hydroxy-tetrahydrodipicolinate synthase from Actinobacillus pleuropneumoniae serotype 5b (strain L20).